The primary structure comprises 1110 residues: Sex-determining transformer protein 1 (1110 aa).

2 disordered regions span residues 1-103 and 170-202; these read MMAP…AQQS and TING…DSDM. Over residues 44–61 the composition is skewed to basic and acidic residues; that stretch reads GSEDKQPGGGDVKTENDP. Residues 65-90 show a composition bias toward polar residues; it reads GLGSATSNFIQSSVPPSHQTLSNPLQ. A compositionally biased stretch (low complexity) spans 188–201; the sequence is NNAANSSNSGNDSD. Residues 208 to 233 form a C2H2-type 1; low DNA-binding affinity zinc finger; sequence LTCRWKSCNSSFQTLKALVDHVQESH. The segment at 244–270 adopts a C2H2-type 2; low DNA-binding affinity zinc-finger fold; the sequence is WRCEWEGCDRNETFKALYMLIVHVRRH. C2H2-type zinc fingers lie at residues 276-300, 306-331, and 337-362; these read NKCE…RRTH, YKCE…NRTH, and YSCQ…KAVH. Disordered stretches follow at residues 363 to 397, 594 to 682, 875 to 895, and 1057 to 1110; these read GDDE…AMSH, EVEP…GSGE, RNVG…DQDR, and QEQP…RHQF. The segment covering 597–606 has biased composition (low complexity); that stretch reads PLQQQQQQEP. Residues 641–652 show a composition bias toward gly residues; it reads GNNGDGGFGGSG. Residues 669–678 show a composition bias toward polar residues; it reads PISQNGSRAS. The span at 886 to 895 shows a compositional bias: basic and acidic residues; that stretch reads RNNRGHDQDR. Positions 1057–1066 are enriched in polar residues; that stretch reads QEQPTSSFSS. Positions 1076–1086 are enriched in pro residues; that stretch reads ALPPPPPPPAP. The segment covering 1092–1103 has biased composition (basic and acidic residues); it reads SADNKDDSENIP.

This sequence belongs to the GLI C2H2-type zinc-finger protein family. As to quaternary structure, interacts with the MX regulatory domain of tra-2. Expressed in intestine and gonads (at protein level).

Its subcellular location is the cytoplasm. It localises to the nucleus. Plays a major role in controlling sexual phenotype. Terminal global regulator in a well-characterized cascade of sex-determining genes. Promotes female development. Interacts with tra-2 to promote spermatogenesis. Promotes spermatogenesis through the Tip60 HAT complex and by regulating the expression of genes, such as fog-3, required for male development. Association with chromatin and at the fog-3 promoter requires wdr-5.1, and may also require wdr-5.2. With trr-1, activates the fog-3 gene to determine sperm/oocyte cell fate. In hermaphrodites, binds to an intronic regulatory site in the ceh-30 gene, preventing ceh-30 transcription and thereby preventing survival of the CEM (cephalic male) sensory neurons. Represses the expression of the transcription factor dmd-3 in hermaphrodites to govern the timing and extent of male tail tip morphogenesis. Plays a role in controlling the sex-specific differentiation of PHC sensory neurons and represses the development of male-specific morphological features. The chain is Sex-determining transformer protein 1 from Caenorhabditis elegans.